The primary structure comprises 339 residues: Adenylosuccinate synthetase (339 aa).

Residues 12–18 (GDEGKGS) and 42–44 (GHS) contribute to the GTP site. Asp-13 serves as the catalytic Proton acceptor. Asp-13 and Gly-42 together coordinate Mg(2+). IMP is bound by residues 13–16 (DEGK), 40–43 (NAGH), Thr-127, Arg-141, Gln-179, Thr-194, and Arg-256. His-43 functions as the Proton donor in the catalytic mechanism. A substrate-binding site is contributed by 252–258 (TVTGRRR). Residues Arg-258, 284–286 (MLD), and 324–326 (KTG) each bind GTP.

This sequence belongs to the adenylosuccinate synthetase family. Homodimer. The cofactor is Mg(2+).

Its subcellular location is the cytoplasm. It catalyses the reaction IMP + L-aspartate + GTP = N(6)-(1,2-dicarboxyethyl)-AMP + GDP + phosphate + 2 H(+). The protein operates within purine metabolism; AMP biosynthesis via de novo pathway; AMP from IMP: step 1/2. Plays an important role in the de novo pathway of purine nucleotide biosynthesis. Catalyzes the first committed step in the biosynthesis of AMP from IMP. This is Adenylosuccinate synthetase from Pyrococcus horikoshii (strain ATCC 700860 / DSM 12428 / JCM 9974 / NBRC 100139 / OT-3).